Consider the following 200-residue polypeptide: Small ribosomal subunit protein uS4 (200 aa).

The tract at residues 22–42 (TGKELQKRPYPPGQHGPGQRR) is disordered. In terms of domain architecture, S4 RNA-binding spans 92 to 152 (SRLDNLVYRL…EKSRNLQVIK (61 aa)).

This sequence belongs to the universal ribosomal protein uS4 family. In terms of assembly, part of the 30S ribosomal subunit. Contacts protein S5. The interaction surface between S4 and S5 is involved in control of translational fidelity.

Functionally, one of the primary rRNA binding proteins, it binds directly to 16S rRNA where it nucleates assembly of the body of the 30S subunit. In terms of biological role, with S5 and S12 plays an important role in translational accuracy. This is Small ribosomal subunit protein uS4 from Geobacillus kaustophilus (strain HTA426).